Consider the following 269-residue polypeptide: Uncharacterised methyltransferase MT1546 (269 aa).

This sequence belongs to the methyltransferase superfamily.

This Mycobacterium tuberculosis (strain CDC 1551 / Oshkosh) protein is Uncharacterised methyltransferase MT1546.